A 400-amino-acid chain; its full sequence is Glutamyl-tRNA reductase (400 aa).

Residues 45–48, S103, 108–110, and Q114 each bind substrate; these read TCNR and EDQ. The Nucleophile role is filled by C46. 179 to 184 provides a ligand contact to NADP(+); that stretch reads GYGEIG.

This sequence belongs to the glutamyl-tRNA reductase family. As to quaternary structure, homodimer.

It catalyses the reaction (S)-4-amino-5-oxopentanoate + tRNA(Glu) + NADP(+) = L-glutamyl-tRNA(Glu) + NADPH + H(+). It functions in the pathway porphyrin-containing compound metabolism; protoporphyrin-IX biosynthesis; 5-aminolevulinate from L-glutamyl-tRNA(Glu): step 1/2. Catalyzes the NADPH-dependent reduction of glutamyl-tRNA(Glu) to glutamate 1-semialdehyde (GSA). This Clostridium perfringens (strain ATCC 13124 / DSM 756 / JCM 1290 / NCIMB 6125 / NCTC 8237 / Type A) protein is Glutamyl-tRNA reductase.